We begin with the raw amino-acid sequence, 460 residues long: Bifunctional protein GlmU (460 aa).

The tract at residues 1–229 (MTNYAIILAA…FNESLGVNDR (229 aa)) is pyrophosphorylase. UDP-N-acetyl-alpha-D-glucosamine-binding positions include 8 to 11 (LAAG), Lys22, Gln72, and 77 to 78 (GT). Asp102 is a binding site for Mg(2+). UDP-N-acetyl-alpha-D-glucosamine-binding residues include Gly139, Glu154, Asn169, and Asn227. A Mg(2+)-binding site is contributed by Asn227. Residues 230–250 (VALATAETVMRQRITQKHMVN) are linker. Residues 251–460 (GVTFQNPETV…RLAHHPSRSK (210 aa)) are N-acetyltransferase. Residues Arg332 and Lys350 each contribute to the UDP-N-acetyl-alpha-D-glucosamine site. The active-site Proton acceptor is His362. Positions 365 and 376 each coordinate UDP-N-acetyl-alpha-D-glucosamine. Acetyl-CoA-binding positions include Ala379, 385 to 386 (NY), Ser404, Ala422, and Arg439.

In the N-terminal section; belongs to the N-acetylglucosamine-1-phosphate uridyltransferase family. It in the C-terminal section; belongs to the transferase hexapeptide repeat family. In terms of assembly, homotrimer. The cofactor is Mg(2+).

It localises to the cytoplasm. It catalyses the reaction alpha-D-glucosamine 1-phosphate + acetyl-CoA = N-acetyl-alpha-D-glucosamine 1-phosphate + CoA + H(+). The enzyme catalyses N-acetyl-alpha-D-glucosamine 1-phosphate + UTP + H(+) = UDP-N-acetyl-alpha-D-glucosamine + diphosphate. It participates in nucleotide-sugar biosynthesis; UDP-N-acetyl-alpha-D-glucosamine biosynthesis; N-acetyl-alpha-D-glucosamine 1-phosphate from alpha-D-glucosamine 6-phosphate (route II): step 2/2. Its pathway is nucleotide-sugar biosynthesis; UDP-N-acetyl-alpha-D-glucosamine biosynthesis; UDP-N-acetyl-alpha-D-glucosamine from N-acetyl-alpha-D-glucosamine 1-phosphate: step 1/1. It functions in the pathway bacterial outer membrane biogenesis; LPS lipid A biosynthesis. Functionally, catalyzes the last two sequential reactions in the de novo biosynthetic pathway for UDP-N-acetylglucosamine (UDP-GlcNAc). The C-terminal domain catalyzes the transfer of acetyl group from acetyl coenzyme A to glucosamine-1-phosphate (GlcN-1-P) to produce N-acetylglucosamine-1-phosphate (GlcNAc-1-P), which is converted into UDP-GlcNAc by the transfer of uridine 5-monophosphate (from uridine 5-triphosphate), a reaction catalyzed by the N-terminal domain. The polypeptide is Bifunctional protein GlmU (Streptococcus pyogenes serotype M5 (strain Manfredo)).